Consider the following 282-residue polypeptide: Ribosomal RNA small subunit methyltransferase I (282 aa).

It belongs to the methyltransferase superfamily. RsmI family.

The protein localises to the cytoplasm. It catalyses the reaction cytidine(1402) in 16S rRNA + S-adenosyl-L-methionine = 2'-O-methylcytidine(1402) in 16S rRNA + S-adenosyl-L-homocysteine + H(+). Its function is as follows. Catalyzes the 2'-O-methylation of the ribose of cytidine 1402 (C1402) in 16S rRNA. In Buchnera aphidicola subsp. Acyrthosiphon pisum (strain APS) (Acyrthosiphon pisum symbiotic bacterium), this protein is Ribosomal RNA small subunit methyltransferase I.